The sequence spans 231 residues: 2-C-methyl-D-erythritol 4-phosphate cytidylyltransferase (231 aa).

This sequence belongs to the IspD/TarI cytidylyltransferase family. IspD subfamily.

The enzyme catalyses 2-C-methyl-D-erythritol 4-phosphate + CTP + H(+) = 4-CDP-2-C-methyl-D-erythritol + diphosphate. Its pathway is isoprenoid biosynthesis; isopentenyl diphosphate biosynthesis via DXP pathway; isopentenyl diphosphate from 1-deoxy-D-xylulose 5-phosphate: step 2/6. Catalyzes the formation of 4-diphosphocytidyl-2-C-methyl-D-erythritol from CTP and 2-C-methyl-D-erythritol 4-phosphate (MEP). The protein is 2-C-methyl-D-erythritol 4-phosphate cytidylyltransferase of Mycobacterium bovis (strain BCG / Pasteur 1173P2).